The chain runs to 419 residues: Transcription termination factor Rho (419 aa).

Residues 48–123 (DIFGDGVLEI…LKVNEVNYDK (76 aa)) enclose the Rho RNA-BD domain. RNA-binding stretches follow at residues 61-66 (GFGFLR), 78-80 (DIY), and 108-110 (ERY). Residues 169-174 (GRGQRG), 181-186 (KAGKTI), and Arg212 contribute to the ATP site. The interval 284–288 (VLTGG) is RNA-binding 2.

This sequence belongs to the Rho family. Homohexamer. The homohexamer assembles into an open ring structure.

Functionally, facilitates transcription termination by a mechanism that involves Rho binding to the nascent RNA, activation of Rho's RNA-dependent ATPase activity, and release of the mRNA from the DNA template. This Buchnera aphidicola subsp. Acyrthosiphon pisum (strain APS) (Acyrthosiphon pisum symbiotic bacterium) protein is Transcription termination factor Rho.